Reading from the N-terminus, the 38-residue chain is Spheniscin-1 (38 aa).

Intrachain disulfides connect Cys5–Cys33, Cys12–Cys27, and Cys17–Cys34.

As to quaternary structure, monomer. As to expression, secreted into the stomach cavity.

It localises to the secreted. Its function is as follows. Has antifungal activity and antibacterial activity against Gram-positive and Gram-negative bacteria. Involved in the process of food preservation in the stomach during the incubation fast. May also be present during infection. The chain is Spheniscin-1 from Aptenodytes patagonicus (King penguin).